The following is a 550-amino-acid chain: Eukaryotic translation initiation factor 3 subunit D-2 (550 aa).

A disordered region spans residues R97–I126. Positions K287–P301 are RNA gate. The segment at S530–N550 is disordered.

It belongs to the eIF-3 subunit D family. As to quaternary structure, component of the eukaryotic translation initiation factor 3 (eIF-3) complex. The eIF-3 complex interacts with pix.

It localises to the cytoplasm. Its function is as follows. mRNA cap-binding component of the eukaryotic translation initiation factor 3 (eIF-3) complex, which is involved in protein synthesis of a specialized repertoire of mRNAs and, together with other initiation factors, stimulates binding of mRNA and methionyl-tRNAi to the 40S ribosome. The eIF-3 complex specifically targets and initiates translation of a subset of mRNAs involved in cell proliferation. In the eIF-3 complex, eif3d specifically recognizes and binds the 7-methylguanosine cap of a subset of mRNAs. This is Eukaryotic translation initiation factor 3 subunit D-2 from Drosophila willistoni (Fruit fly).